The sequence spans 143 residues: Large ribosomal subunit protein uL13 (143 aa).

This sequence belongs to the universal ribosomal protein uL13 family. Part of the 50S ribosomal subunit.

This protein is one of the early assembly proteins of the 50S ribosomal subunit, although it is not seen to bind rRNA by itself. It is important during the early stages of 50S assembly. The sequence is that of Large ribosomal subunit protein uL13 from Prochlorococcus marinus (strain MIT 9301).